The chain runs to 60 residues: MELVKVVFMGWFKNESMFTKEITMMKDDVQWATTQYAEVNKALVKAFIDDKKVCEVDCRG.

As to quaternary structure, can form a complex with non-cognate host toxins LsoA and RnlA.

In terms of biological role, antitoxin component of a potential type II toxin-antitoxin (TA) system. Acts as an antitoxin against host toxins RnlA and LsoA, preventing them from degrading T4 bacteriophage-derived mRNA and thus permitting successful virus infection. Stabilizes middle (8-10 minutes) and late (18 to 28 minutes) T4 gene transcripts. This is Antitoxin Dmd (dmd) from Escherichia coli (Bacteriophage T4).